Consider the following 336-residue polypeptide: Meiotically up-regulated gene 33 protein (336 aa).

The disordered stretch occupies residues 232–336; that stretch reads ISEDDGLKRG…KPSRFSWGRS (105 aa). The span at 250–262 shows a compositional bias: polar residues; it reads TFSNDSRSLSSYA.

It localises to the cytoplasm. In terms of biological role, has a role in meiosis. In Schizosaccharomyces pombe (strain 972 / ATCC 24843) (Fission yeast), this protein is Meiotically up-regulated gene 33 protein (mug33).